Here is a 507-residue protein sequence, read N- to C-terminus: UDP-N-acetylhexosamine pyrophosphorylase-like protein 1 (507 aa).

The interval 56–91 (ACARPHGPPPDLAARLRPLPPERVGRASRSDPETRR) is disordered. Over residues 78–91 (RVGRASRSDPETRR) the composition is skewed to basic and acidic residues. A Substrate binding motif is present at residues 111–114 (LAGG). Residues 111-114 (LAGG), Lys125, Gln199, and Gly225 contribute to the UTP site. Residue Asn226 coordinates substrate. Asp256 is a UTP binding site. The short motif at 306–307 (EY) is the Substrate binding element. Lys380 is a UTP binding site. Substrate is bound at residue Lys410.

This sequence belongs to the UDPGP type 1 family.

The sequence is that of UDP-N-acetylhexosamine pyrophosphorylase-like protein 1 (UAP1L1) from Homo sapiens (Human).